The primary structure comprises 690 residues: Calpain-9 (690 aa).

The interval 1-24 is disordered; it reads MPYLYRAPGPQAHPVPKDARITHS. Positions 42 to 337 constitute a Calpain catalytic domain; sequence LFEDADFPAS…FDKVEICNLT (296 aa). Residues Leu-81, Gly-83, and Asp-88 each coordinate Ca(2+). Cys-97 is an active-site residue. Position 167 (Glu-167) interacts with Ca(2+). Active-site residues include His-254 and Asn-278. Residues Glu-284, Asp-291, Leu-312, Asp-314, and Glu-316 each coordinate Ca(2+). Residues 338–521 form a domain III region; it reads PDALEEDAIH…PPDQETEEEQ (184 aa). The interval 498–519 is disordered; sequence GNVDIDLPEPPKPTPPDQETEE. 3 consecutive EF-hand domains span residues 518-552, 561-589, and 591-626; these read EEEQ…VLQK, LSLI…FKVF, and DKLK…AGFQ. The segment at 522–690 is domain IV; it reads RFRALFEQVA…NEFIHLTMNI (169 aa). Positions 574, 576, 578, 580, 585, 604, 606, 608, 610, and 615 each coordinate Ca(2+).

The protein belongs to the peptidase C2 family. In terms of tissue distribution, expressed predominantly in stomach.

Its function is as follows. Calcium-regulated non-lysosomal thiol-protease. This Homo sapiens (Human) protein is Calpain-9 (CAPN9).